Reading from the N-terminus, the 434-residue chain is FAD-dependent monooxygenase cfoG (434 aa).

The signal sequence occupies residues 1-22 (MKSSPGLHIIIVGAGITGLATA). FAD is bound at residue glutamate 36. Active-site residues include arginine 193 and tyrosine 233. 2 residues coordinate FAD: aspartate 314 and glycine 327.

This sequence belongs to the paxM FAD-dependent monooxygenase family. Monomer. It depends on FAD as a cofactor.

Its pathway is secondary metabolite biosynthesis; flavonoid biosynthesis. Functionally, monooxygenase; part of the gene cluster that mediates the biosynthesis of chlorflavonin, a fungal flavonoid with acetolactate synthase inhibitory activity. Within the pathway, cfoG is responsible for the hydroxylation of the flavonoid skeleton at position C8. The pathway begins with the PKS-NRPS hybrid synthetase cfoA that uses benzoic acid or p-hydroxybenzoic acid as a starter unit with four rounds of chain elongation using malonyl-CoA to form the chalcone skeleton. Then, a new type of chalcone isomerase, cfoK, catalyzes the conversion of the chalcone into a flavanone by a histidine-mediated oxa-Michael addition mechanism. The desaturation of flavanone to flavone is catalyzed by a new type of flavone synthase, the flavin mononucleotide (FMN)-dependent oxidoreductase cfoJ. Monooxygenases cfoF, cfoG, and P450 cfoH are responsible for the hydroxylation of the flavonoid skeleton at sites C3, C8, and C2', respectively. Like cfoF, the dehydratase cfoI plays also a role in the hydroxylation of position C3. Methyltransferases cfoB, cfoC, and cfoD then catalyze the methylation of C7-OH, C8-OH, and C3-OH, respectively. Finally, the monooxygenase cfoE is responsible for the chlorination of flavonoid at position C3'. This Aspergillus candidus protein is FAD-dependent monooxygenase cfoG.